Here is a 194-residue protein sequence, read N- to C-terminus: MGAGNTKLSKEEINELIKKTNYTKDQIDKLSKDYNEYSSKDKKSGFTESEFIDFFYCRFRDWDKDLLIQLFKLFDTDCNGILDFKEFVTSLYIMTKAPVVEKLSLLFDLFDKDQSGHLEVDEVEKLIGVAVACGTSLGMDYSGVTNYVFSICSAENMSNKKKGMNKEEFIKAASNSDKFCKMICFYDSMGQMLY.

EF-hand domains follow at residues tryptophan 62–alanine 97 and proline 98–cysteine 133. Aspartate 75, aspartate 77, asparagine 79, glutamate 86, aspartate 111, aspartate 113, serine 115, histidine 117, and glutamate 122 together coordinate Ca(2+).

The protein belongs to the recoverin family.

In Dictyostelium discoideum (Social amoeba), this protein is Calcium-binding protein J (cbpJ).